We begin with the raw amino-acid sequence, 318 residues long: Thymidylate synthase (318 aa).

DUMP-binding positions include Arg-25 and 180-181 (RR). The active-site Nucleophile is Cys-200. Residues 220–223 (RSGD), Asn-231, and 261–263 (HIY) each bind dUMP. Asp-223 serves as a coordination point for (6R)-5,10-methylene-5,6,7,8-tetrahydrofolate. Residue Ala-317 participates in (6R)-5,10-methylene-5,6,7,8-tetrahydrofolate binding.

Belongs to the thymidylate synthase family. Bacterial-type ThyA subfamily. As to quaternary structure, homodimer.

Its subcellular location is the cytoplasm. The enzyme catalyses dUMP + (6R)-5,10-methylene-5,6,7,8-tetrahydrofolate = 7,8-dihydrofolate + dTMP. It participates in pyrimidine metabolism; dTTP biosynthesis. Its function is as follows. Catalyzes the reductive methylation of 2'-deoxyuridine-5'-monophosphate (dUMP) to 2'-deoxythymidine-5'-monophosphate (dTMP) while utilizing 5,10-methylenetetrahydrofolate (mTHF) as the methyl donor and reductant in the reaction, yielding dihydrofolate (DHF) as a by-product. This enzymatic reaction provides an intracellular de novo source of dTMP, an essential precursor for DNA biosynthesis. In Lactobacillus helveticus (strain DPC 4571), this protein is Thymidylate synthase.